A 508-amino-acid polypeptide reads, in one-letter code: Lysine--tRNA ligase (508 aa).

Residues glutamate 418 and glutamate 425 each coordinate Mg(2+).

It belongs to the class-II aminoacyl-tRNA synthetase family. In terms of assembly, homodimer. The cofactor is Mg(2+).

It is found in the cytoplasm. The catalysed reaction is tRNA(Lys) + L-lysine + ATP = L-lysyl-tRNA(Lys) + AMP + diphosphate. This is Lysine--tRNA ligase from Burkholderia pseudomallei (strain 668).